The primary structure comprises 963 residues: uncharacterized protein (963 aa).

Coiled coils occupy residues 176–236 (NGRN…HIRM) and 373–467 (DYEW…KKTV). A helical membrane pass occupies residues 468-488 (IAAGMLFIVLFSLLQQWIPAI). Coiled-coil stretches lie at residues 536–570 (RNKQ…AEMA) and 647–789 (ALHT…LEAS).

It localises to the cell membrane. This is an uncharacterized protein from Bacillus subtilis (strain 168).